We begin with the raw amino-acid sequence, 44 residues long: Hyaluronidase CdtHya1 (44 aa).

The protein belongs to the glycosyl hydrolase 56 family. Monomer. In terms of processing, contains disulfide bonds. Glycosylated. Expressed by the venom gland.

The protein localises to the secreted. The enzyme catalyses Random hydrolysis of (1-&gt;4)-linkages between N-acetyl-beta-D-glucosamine and D-glucuronate residues in hyaluronate.. Snake venom endo-hyaluronidase that degrades hyaluronan to smaller oligosaccharide fragments. In venom, it is not toxic by itself, but increases the diffusion of other venom proteins such as crotoxin (a neurotoxic and myotoxic PLA2) by degrading the extracellular matrix. In addition, it displays antiedematogenic activity, since it significantly diminishes the oedematogenic activity of crotoxin (probably by direct substrate hydrolysis, since hyaluronan possesses strong water-binding capacity). The polypeptide is Hyaluronidase CdtHya1 (Crotalus durissus terrificus (South American rattlesnake)).